Reading from the N-terminus, the 229-residue chain is UPF0758 protein Moth_0536 (229 aa).

The MPN domain occupies 107–229 (VIRNPRDVAG…FTSLKERNLL (123 aa)). 3 residues coordinate Zn(2+): H178, H180, and D191. The short motif at 178–191 (HNHPSGDPTPSQED) is the JAMM motif element.

This sequence belongs to the UPF0758 family.

The sequence is that of UPF0758 protein Moth_0536 from Moorella thermoacetica (strain ATCC 39073 / JCM 9320).